The sequence spans 24 residues: M-ectatotoxin-Eb2b (24 aa).

As to expression, expressed by the venom gland.

Its subcellular location is the secreted. In terms of biological role, antimicrobial peptide active against Gram-negative bacterium E.coli MH1 (MIC=2.5 uM) and P.aeruginosa PAO1 (MIC=10 uM) and against Gram-positive bacterium A.globiformis VKM Ac-1112 (MIC=0.6 uM). The sequence is that of M-ectatotoxin-Eb2b from Ectatomma brunneum (Ant).